Reading from the N-terminus, the 476-residue chain is Bifunctional protein HldE (476 aa).

The segment at 1–318 (MKPILPDYSQ…AEAIHGSQDT (318 aa)) is ribokinase. 195 to 198 (NMAE) lines the ATP pocket. Asp264 is a catalytic residue. A cytidylyltransferase region spans residues 344–476 (MTNGCFDILH…IIKAIKGGRG (133 aa)).

This sequence in the N-terminal section; belongs to the carbohydrate kinase PfkB family. It in the C-terminal section; belongs to the cytidylyltransferase family. Homodimer.

It carries out the reaction D-glycero-beta-D-manno-heptose 7-phosphate + ATP = D-glycero-beta-D-manno-heptose 1,7-bisphosphate + ADP + H(+). The enzyme catalyses D-glycero-beta-D-manno-heptose 1-phosphate + ATP + H(+) = ADP-D-glycero-beta-D-manno-heptose + diphosphate. The protein operates within nucleotide-sugar biosynthesis; ADP-L-glycero-beta-D-manno-heptose biosynthesis; ADP-L-glycero-beta-D-manno-heptose from D-glycero-beta-D-manno-heptose 7-phosphate: step 1/4. It participates in nucleotide-sugar biosynthesis; ADP-L-glycero-beta-D-manno-heptose biosynthesis; ADP-L-glycero-beta-D-manno-heptose from D-glycero-beta-D-manno-heptose 7-phosphate: step 3/4. Functionally, catalyzes the phosphorylation of D-glycero-D-manno-heptose 7-phosphate at the C-1 position to selectively form D-glycero-beta-D-manno-heptose-1,7-bisphosphate. Its function is as follows. Catalyzes the ADP transfer from ATP to D-glycero-beta-D-manno-heptose 1-phosphate, yielding ADP-D-glycero-beta-D-manno-heptose. The chain is Bifunctional protein HldE from Vibrio atlanticus (strain LGP32) (Vibrio splendidus (strain Mel32)).